Here is an 87-residue protein sequence, read N- to C-terminus: Small ribosomal subunit protein bS20 (87 aa).

The interval 1–20 (MANSAQARKRARTALKQRAH) is disordered. The segment covering 7–19 (ARKRARTALKQRA) has biased composition (basic residues).

This sequence belongs to the bacterial ribosomal protein bS20 family.

Binds directly to 16S ribosomal RNA. The polypeptide is Small ribosomal subunit protein bS20 (Chromobacterium violaceum (strain ATCC 12472 / DSM 30191 / JCM 1249 / CCUG 213 / NBRC 12614 / NCIMB 9131 / NCTC 9757 / MK)).